The primary structure comprises 263 residues: Small ribosomal subunit protein uS2 (263 aa).

Residues 223–249 (KALREQDGEALANEEKEITDEEKKEVL) show a composition bias toward basic and acidic residues. Residues 223–263 (KALREQDGEALANEEKEITDEEKKEVLDEAMSEEDFGEEQE) form a disordered region. The segment covering 250 to 263 (DEAMSEEDFGEEQE) has biased composition (acidic residues).

It belongs to the universal ribosomal protein uS2 family.

In Campylobacter jejuni subsp. jejuni serotype O:6 (strain 81116 / NCTC 11828), this protein is Small ribosomal subunit protein uS2.